The chain runs to 185 residues: Ribosome-recycling factor (185 aa).

This sequence belongs to the RRF family.

The protein localises to the cytoplasm. Responsible for the release of ribosomes from messenger RNA at the termination of protein biosynthesis. May increase the efficiency of translation by recycling ribosomes from one round of translation to another. In Haemophilus ducreyi (strain 35000HP / ATCC 700724), this protein is Ribosome-recycling factor.